The sequence spans 182 residues: uncharacterized protein (182 aa).

2 disordered regions span residues methionine 1–leucine 73 and serine 105–arginine 182. Composition is skewed to low complexity over residues arginine 43–serine 68 and serine 105–threonine 121. The span at alanine 122–serine 131 shows a compositional bias: pro residues.

This is an uncharacterized protein from Caenorhabditis elegans.